The following is a 186-amino-acid chain: Coiled-coil domain-containing protein ORF13 (186 aa).

2 coiled-coil regions span residues 2 to 30 and 63 to 85; these read GIKEKEIELETLKREIAQAEASLEQDFIK and LREKLTDKVSKAMDLSDEIQRDK.

The protein is Coiled-coil domain-containing protein ORF13 of Helicobacter pylori (strain 35A).